A 173-amino-acid polypeptide reads, in one-letter code: Zinc finger A20 and AN1 domain-containing stress-associated protein 2 (173 aa).

An A20-type zinc finger spans residues 12–46; the sequence is PEGPKLCTNNCGFFGSAATMNMCSKCHKDMLFQQE. Residues cysteine 18, cysteine 22, cysteine 34, cysteine 37, cysteine 114, cysteine 117, cysteine 128, cysteine 130, cysteine 135, histidine 138, histidine 144, and cysteine 146 each coordinate Zn(2+). An AN1-type zinc finger spans residues 108 to 154; that stretch reads PKGPSRCTTCNKRVGLTGFKCRCGSLFCGTHRYADVHDCSFNYHAAA.

Functionally, may be involved in environmental stress response. In Arabidopsis thaliana (Mouse-ear cress), this protein is Zinc finger A20 and AN1 domain-containing stress-associated protein 2 (SAP2).